A 122-amino-acid chain; its full sequence is Glycine cleavage system H protein (122 aa).

Residues 19-101 (TATIGITKHA…EGNSWLYKIK (83 aa)) enclose the Lipoyl-binding domain. Residue lysine 60 is modified to N6-lipoyllysine.

Belongs to the GcvH family. In terms of assembly, the glycine cleavage system is composed of four proteins: P, T, L and H. (R)-lipoate serves as cofactor.

Its function is as follows. The glycine cleavage system catalyzes the degradation of glycine. The H protein shuttles the methylamine group of glycine from the P protein to the T protein. The protein is Glycine cleavage system H protein of Dinoroseobacter shibae (strain DSM 16493 / NCIMB 14021 / DFL 12).